A 514-amino-acid chain; its full sequence is ATP synthase subunit alpha (514 aa).

Position 170–177 (170–177 (GDRQIGKS)) interacts with ATP.

Belongs to the ATPase alpha/beta chains family. In terms of assembly, F-type ATPases have 2 components, CF(1) - the catalytic core - and CF(0) - the membrane proton channel. CF(1) has five subunits: alpha(3), beta(3), gamma(1), delta(1), epsilon(1). CF(0) has three main subunits: a(1), b(2) and c(9-12). The alpha and beta chains form an alternating ring which encloses part of the gamma chain. CF(1) is attached to CF(0) by a central stalk formed by the gamma and epsilon chains, while a peripheral stalk is formed by the delta and b chains.

Its subcellular location is the cell inner membrane. It carries out the reaction ATP + H2O + 4 H(+)(in) = ADP + phosphate + 5 H(+)(out). In terms of biological role, produces ATP from ADP in the presence of a proton gradient across the membrane. The alpha chain is a regulatory subunit. This is ATP synthase subunit alpha from Chromohalobacter salexigens (strain ATCC BAA-138 / DSM 3043 / CIP 106854 / NCIMB 13768 / 1H11).